The sequence spans 217 residues: Adenylate kinase (217 aa).

An ATP-binding site is contributed by 10 to 15 (GAGKGT). The interval 30–59 (STGDMFRAAIKEGTELGLQAKSFMDQGALV) is NMP. AMP contacts are provided by residues Thr31, Arg36, 57–59 (ALV), 85–88 (GFPR), and Gln92. The tract at residues 126 to 163 (GRRICKTCGASYHLIFNPPAEEGKCDKDGGELYTRADD) is LID. Arg127 is an ATP binding site. Cys130 and Cys133 together coordinate Zn(2+). ATP is bound at residue 136–137 (SY). Zn(2+)-binding residues include Cys150 and Asp153. Residues Arg160 and Arg171 each contribute to the AMP site. Residue Gln199 coordinates ATP.

This sequence belongs to the adenylate kinase family. As to quaternary structure, monomer.

Its subcellular location is the cytoplasm. The enzyme catalyses AMP + ATP = 2 ADP. It functions in the pathway purine metabolism; AMP biosynthesis via salvage pathway; AMP from ADP: step 1/1. In terms of biological role, catalyzes the reversible transfer of the terminal phosphate group between ATP and AMP. Plays an important role in cellular energy homeostasis and in adenine nucleotide metabolism. The sequence is that of Adenylate kinase from Lysinibacillus sphaericus (strain C3-41).